The primary structure comprises 183 residues: Acyl-homoserine-lactone synthase (183 aa).

Belongs to the autoinducer synthase family.

It catalyses the reaction a fatty acyl-[ACP] + S-adenosyl-L-methionine = an N-acyl-L-homoserine lactone + S-methyl-5'-thioadenosine + holo-[ACP] + H(+). Involved in the synthesis of the acyl-homoserine lactone (AHL) signal N-(3-hydroxydodecanoyl)-L-HSL (3-hydroxy-C(12)-HSL or OH-dDHL). Probably part of a quorum-sensing system with AnoR. The protein is Acyl-homoserine-lactone synthase of Acinetobacter nosocomialis.